Reading from the N-terminus, the 386-residue chain is Succinate--CoA ligase [ADP-forming] subunit beta (386 aa).

Residues 9–244 enclose the ATP-grasp domain; it reads KEIFRKYGVP…LAEEEPREIQ (236 aa). ATP contacts are provided by residues K46, 53-55, E99, L102, and E107; that span reads GRG. 2 residues coordinate Mg(2+): N199 and D213. Substrate is bound by residues N264 and 321 to 323; that span reads GIM.

This sequence belongs to the succinate/malate CoA ligase beta subunit family. Heterotetramer of two alpha and two beta subunits. The cofactor is Mg(2+).

It catalyses the reaction succinate + ATP + CoA = succinyl-CoA + ADP + phosphate. It carries out the reaction GTP + succinate + CoA = succinyl-CoA + GDP + phosphate. Its pathway is carbohydrate metabolism; tricarboxylic acid cycle; succinate from succinyl-CoA (ligase route): step 1/1. In terms of biological role, succinyl-CoA synthetase functions in the citric acid cycle (TCA), coupling the hydrolysis of succinyl-CoA to the synthesis of either ATP or GTP and thus represents the only step of substrate-level phosphorylation in the TCA. The beta subunit provides nucleotide specificity of the enzyme and binds the substrate succinate, while the binding sites for coenzyme A and phosphate are found in the alpha subunit. The protein is Succinate--CoA ligase [ADP-forming] subunit beta of Myxococcus xanthus (strain DK1622).